Here is a 260-residue protein sequence, read N- to C-terminus: Sulfoquinovose 1-dehydrogenase (260 aa).

Tyr160 acts as the Proton acceptor in catalysis.

Belongs to the short-chain dehydrogenases/reductases (SDR) family.

The catalysed reaction is 6-sulfo-D-quinovose + NAD(+) = 6-deoxy-6-sulfo-D-glucono-1,5-lactone + NADH + H(+). Functionally, catalyzes the oxidation of sulfoquinovose to 6-deoxy-6-sulfo-D-glucono-1,5-lactone, with a strong preference for NAD(+) as the electron acceptor. Is involved in a degradation pathway of sulfoquinovose (SQ) that allows P.putida SQ1 to use SQ as the sole carbon and energy source for growth. In Pseudomonas putida (Arthrobacter siderocapsulatus), this protein is Sulfoquinovose 1-dehydrogenase.